The chain runs to 215 residues: 3-dehydroquinate dehydratase (215 aa).

Residues 30–32 and Arg62 each bind 3-dehydroquinate; that span reads EVR. The active-site Proton donor/acceptor is His114. Lys140 serves as the catalytic Schiff-base intermediate with substrate. Residues Arg178 and Gln201 each coordinate 3-dehydroquinate.

This sequence belongs to the type-I 3-dehydroquinase family. In terms of assembly, homodimer.

The enzyme catalyses 3-dehydroquinate = 3-dehydroshikimate + H2O. The protein operates within metabolic intermediate biosynthesis; chorismate biosynthesis; chorismate from D-erythrose 4-phosphate and phosphoenolpyruvate: step 3/7. Involved in the third step of the chorismate pathway, which leads to the biosynthesis of aromatic amino acids. Catalyzes the cis-dehydration of 3-dehydroquinate (DHQ) and introduces the first double bond of the aromatic ring to yield 3-dehydroshikimate. The chain is 3-dehydroquinate dehydratase from Methanopyrus kandleri (strain AV19 / DSM 6324 / JCM 9639 / NBRC 100938).